We begin with the raw amino-acid sequence, 245 residues long: 1-(5-phosphoribosyl)-5-[(5-phosphoribosylamino)methylideneamino] imidazole-4-carboxamide isomerase (245 aa).

D15 acts as the Proton acceptor in catalysis. D135 serves as the catalytic Proton donor.

This sequence belongs to the HisA/HisF family.

It localises to the cytoplasm. The catalysed reaction is 1-(5-phospho-beta-D-ribosyl)-5-[(5-phospho-beta-D-ribosylamino)methylideneamino]imidazole-4-carboxamide = 5-[(5-phospho-1-deoxy-D-ribulos-1-ylimino)methylamino]-1-(5-phospho-beta-D-ribosyl)imidazole-4-carboxamide. It participates in amino-acid biosynthesis; L-histidine biosynthesis; L-histidine from 5-phospho-alpha-D-ribose 1-diphosphate: step 4/9. In Haloquadratum walsbyi (strain DSM 16790 / HBSQ001), this protein is 1-(5-phosphoribosyl)-5-[(5-phosphoribosylamino)methylideneamino] imidazole-4-carboxamide isomerase.